The following is a 128-amino-acid chain: V-type proton ATPase subunit F (128 aa).

The protein belongs to the V-ATPase F subunit family. V-ATPase is a heteromultimeric enzyme composed of a peripheral catalytic V1 complex (components A to H) attached to an integral membrane V0 proton pore complex (components: a, c, c'', d and e).

Its subcellular location is the vacuole membrane. Functionally, subunit of the peripheral V1 complex of vacuolar ATPase essential for assembly or catalytic function. V-ATPase is responsible for acidifying a variety of intracellular compartments in eukaryotic cells. The polypeptide is V-type proton ATPase subunit F (VHA-F) (Arabidopsis thaliana (Mouse-ear cress)).